The chain runs to 1025 residues: Retinoblastoma-related protein (1025 aa).

Positions 1 to 20 (MEDHPPKPSIPTADASLSNH) are disordered. The interval 422–623 (TPVTTAMTTA…EKGSSMYNSL (202 aa)) is domain A. The interval 422 to 875 (TPVTTAMTTA…NEIFIPAVKP (454 aa)) is pocket. The spacer stretch occupies residues 624–744 (TVARPALSAE…PGAGGETCAE (121 aa)). The tract at residues 745-875 (TAINVFFSKI…NEIFIPAVKP (131 aa)) is domain B.

The protein belongs to the retinoblastoma protein (RB) family.

Its subcellular location is the nucleus. In terms of biological role, regulator of biological processes that recruits a histone deacetylase to control gene transcription. May play a role in the entry into mitosis, negatively regulating the cell proliferation. Formation of stable complexes with geminiviridae replication-associated proteins may create a cellular environment which favors viral DNA replication. The sequence is that of Retinoblastoma-related protein (pRB) from Camellia sinensis (Tea plant).